Reading from the N-terminus, the 74-residue chain is U4-theraphotoxin-Cg1a (74 aa).

A signal peptide spans 1 to 19 (MNATIFALLLLLNLAMYNA). A propeptide spanning residues 20-39 (AEQSSETDMDDTLLIPEINR) is cleaved from the precursor. Intrachain disulfides connect Cys42–Cys56, Cys49–Cys61, and Cys55–Cys71.

The protein belongs to the neurotoxin 36 family. 01 subfamily. As to expression, expressed by the venom gland.

It localises to the secreted. In terms of biological role, probable ion channel inhibitor. This chain is U4-theraphotoxin-Cg1a, found in Chilobrachys guangxiensis (Chinese earth tiger tarantula).